We begin with the raw amino-acid sequence, 1088 residues long: Protocadherin-19 (1088 aa).

The signal sequence occupies residues 1–24 (MHSKDMDFVQMFVCFLLCWTGVDA). The Extracellular segment spans residues 25–678 (VFNLKYTVEE…QEQIGPVNLS (654 aa)). 6 Cadherin domains span residues 31 to 130 (TVEE…APRF), 131 to 239 (PTNH…NPVF), 240 to 347 (DEPV…APEI), 351 to 454 (SENS…PPYF), 455 to 563 (TKPH…TPVM), and 569 to 676 (VNGT…GPVN). Positions 34 and 35 each coordinate Ca(2+). Asparagine 44 carries N-linked (GlcNAc...) asparagine glycosylation. Ca(2+) is bound by residues aspartate 89 and aspartate 91. Cysteine 94 and cysteine 100 are joined by a disulfide. Residues aspartate 122, valine 123, asparagine 124, aspartate 125, asparagine 126, glutamate 141, aspartate 156, aspartate 158, asparagine 162, glutamate 200, aspartate 213, aspartate 231, serine 232, asparagine 233, aspartate 234, asparagine 235, and glutamate 250 each coordinate Ca(2+). N-linked (GlcNAc...) asparagine glycosylation is present at asparagine 262. Residues aspartate 265, aspartate 267, and asparagine 271 each coordinate Ca(2+). Residue asparagine 284 is glycosylated (N-linked (GlcNAc...) asparagine). 9 residues coordinate Ca(2+): aspartate 306, glutamate 308, aspartate 339, isoleucine 340, asparagine 341, aspartate 342, asparagine 343, glutamate 361, and aspartate 376. Asparagine 377 carries N-linked (GlcNAc...) asparagine glycosylation. Residues aspartate 378, asparagine 382, aspartate 413, and glutamate 415 each coordinate Ca(2+). The N-linked (GlcNAc...) asparagine glycan is linked to asparagine 421. Residues aspartate 428, aspartate 446, glutamate 447, asparagine 448, aspartate 449, asparagine 450, glutamate 465, aspartate 480, aspartate 482, asparagine 486, asparagine 522, glutamate 524, and aspartate 537 each coordinate Ca(2+). Asparagine 486 carries an N-linked (GlcNAc...) asparagine glycan. An N-linked (GlcNAc...) asparagine glycan is attached at asparagine 546. Ca(2+)-binding residues include aspartate 555, valine 556, asparagine 557, aspartate 558, and asparagine 559. Residue asparagine 570 is glycosylated (N-linked (GlcNAc...) asparagine). Ca(2+)-binding residues include aspartate 594, aspartate 596, asparagine 600, and aspartate 646. Asparagine 676 carries N-linked (GlcNAc...) asparagine glycosylation. Residues 679–699 (LIFIIALGSIAVILFVTMIFV) traverse the membrane as a helical segment. Topologically, residues 700 to 1088 (AVKCKRDNKE…GSKRLKDIVL (389 aa)) are cytoplasmic. Disordered regions lie at residues 792–813 (NSRN…GPQQ), 851–875 (DMEG…HDVQ), 970–1032 (TFGK…ASST), and 1067–1088 (TLLQ…DIVL). Positions 859–875 (DSGHEESDQTDSEHDVQ) are enriched in basic and acidic residues. The span at 1071 to 1088 (DGRDKESPGSKRLKDIVL) shows a compositional bias: basic and acidic residues.

As to quaternary structure, homodimer; antiparallel. Interacts with cadherin cdh2; the interaction confers robust cell adhesion activity on pcdh19. As to expression, in the embryo, strongly expressed in the developing nervous system. At 12 hours post fertilization (hpf), shows a segmental expression pattern in the anterior third of the neural keel with strong expression in the presumptive forebrain, cerebellum/rhombomere 1 and rhombomere 4. By 24 hpf, expressed widely in the brain and spinal cord with higher expression levels in the ventral telencephalon, dorsal and central thalamus, optic tectum, central tegmentum, cerebellum and dorsolateral regions of the hindbrain. As development proceeds, expression becomes restricted to the dorsal and/or lateral regions of the central nervous system. Not detected in the spinal cord of two- and three-day old embryos. Expressed in the eye primordium, developing retina, lens and otic vesicle. Expressed in the larval optic tectum at 4 days post-fertilization where it localizes in discrete columns of neurons. Expressed throughout the adult brain with strong expression in the ventromedial telencephalon, periventricular regions of the thalamus and anterior hypothalamus, stratum periventriculare of the optic tectum, dorsal tegmental nucleus, granular regions of the cerebellar body and valvula, and superficial layers of the facial and vagal lobes.

The protein resides in the cell membrane. In terms of biological role, calcium-dependent cell-adhesion protein. Essential for the early stages of neurulation in the anterior neural plate. Shows little cell adhesion activity on its own but exhibits robust homophilic cell adhesion when in a complex with cadherin cdh2 and appears to mediate the adhesion while cdh2 acts as a cell adhesion cofactor in the complex. Functions with cdh2 to coordinate cell adhesion and cell movements during neurulation. Contributes to neural progenitor cell patterning with cdh2 by promoting homophilic cell interactions. Regulates the columnar organization of neurons in the optic tectum. This chain is Protocadherin-19, found in Danio rerio (Zebrafish).